Reading from the N-terminus, the 413-residue chain is F-box/kelch-repeat protein At5g26960 (413 aa).

The F-box domain occupies 41–90 (SATIASLPDDLLLECISRVPSSSIPSLAVVCRRWSRLLHSPYFLHLRRRL). Kelch repeat units follow at residues 96–141 (SLFA…YGSL), 152–191 (RVYVVSRNAVLRYDSWMGTLNLRSPMIFPRKKFAIAVVSG), 192–238 (KIYV…AVDG), 240–295 (FYVI…AAVG), and 367–413 (LLRR…CVEW).

The polypeptide is F-box/kelch-repeat protein At5g26960 (Arabidopsis thaliana (Mouse-ear cress)).